We begin with the raw amino-acid sequence, 488 residues long: Putative BTB/POZ domain-containing protein L674 (488 aa).

A BTB domain is found at 83–150 (NIVYFNIGGK…VKNQKCPINN (68 aa)).

Belongs to the mimivirus BTB/WD family.

The protein is Putative BTB/POZ domain-containing protein L674 of Acanthamoeba polyphaga (Amoeba).